The chain runs to 261 residues: Ribonuclease PH (261 aa).

Phosphate is bound by residues Arg-87 and 125–127; that span reads GTR.

It belongs to the RNase PH family. As to quaternary structure, homohexameric ring arranged as a trimer of dimers.

The enzyme catalyses tRNA(n+1) + phosphate = tRNA(n) + a ribonucleoside 5'-diphosphate. Phosphorolytic 3'-5' exoribonuclease that plays an important role in tRNA 3'-end maturation. Removes nucleotide residues following the 3'-CCA terminus of tRNAs; can also add nucleotides to the ends of RNA molecules by using nucleoside diphosphates as substrates, but this may not be physiologically important. Probably plays a role in initiation of 16S rRNA degradation (leading to ribosome degradation) during starvation. This chain is Ribonuclease PH, found in Caldanaerobacter subterraneus subsp. tengcongensis (strain DSM 15242 / JCM 11007 / NBRC 100824 / MB4) (Thermoanaerobacter tengcongensis).